We begin with the raw amino-acid sequence, 86 residues long: Neurotoxin LmNaTx34.2 (86 aa).

The signal sequence occupies residues 1-18 (MKTLILVVIALMVIEVKS). An LCN-type CS-alpha/beta domain is found at 19 to 85 (DGYLMVRAGR…IWTYEKNTCS (67 aa)). Cystine bridges form between Cys32-Cys84, Cys36-Cys57, Cys43-Cys64, and Cys47-Cys66.

Belongs to the long (4 C-C) scorpion toxin superfamily. Sodium channel inhibitor family. Beta subfamily. As to expression, expressed by the venom gland.

The protein localises to the secreted. Binds voltage-independently at site-4 of sodium channels (Nav) and shift the voltage of activation toward more negative potentials thereby affecting sodium channel activation and promoting spontaneous and repetitive firing. The chain is Neurotoxin LmNaTx34.2 from Lychas mucronatus (Chinese swimming scorpion).